The sequence spans 381 residues: Transcription termination factor 4, mitochondrial (381 aa).

Residues 1-42 (MAAFGRQVLDWHRLIPLTWACMARQTPHLGEQRRTTASLLRK) constitute a mitochondrion transit peptide. MTERF repeat units follow at residues 142-172 (CVVL…LGLG), 177-204 (KRVL…LKEK), 209-239 (VQQV…YAYF), 245-270 (HPDI…YLER), and 290-318 (LKDI…VFKK). The dimerization with NSUN4 stretch occupies residues 310-327 (VEEFQVFKKLLAREEEES). Positions 322-381 (REEEESESSTSDDKRASLDEDEDDDDEEDNDEDDNDEDDDDEDDDEAEDNDEDEDDDEEE) are disordered. Positions 340-381 (DEDEDDDDEEDNDEDDNDEDDDDEDDDEAEDNDEDEDDDEEE) are enriched in acidic residues.

This sequence belongs to the mTERF family. In terms of assembly, heterodimer with NSUN4; this interaction may be required for NSUN4 recruitment to the mitochondrial large ribosomal subunit. Post-translationally, the mature mitochondrial protein exists in 2 forms differing at the level of their N-terminus, one is starting at residue 43 and the other at residue 48.

The protein localises to the mitochondrion. In terms of biological role, regulator of mitochondrial ribosome biogenesis and translation. Binds to mitochondrial ribosomal RNAs 16S, 12S and 7S and targets NSUN4 RNA methyltransferase to the mitochondrial large ribosomal subunit (39S). The protein is Transcription termination factor 4, mitochondrial (MTERF4) of Homo sapiens (Human).